Here is a 236-residue protein sequence, read N- to C-terminus: WUSCHEL-related homeobox 4 (236 aa).

A DNA-binding region (homeobox; WUS-type) is located at residues 88 to 152 (AGTTRWNPSA…NHKARERQKQ (65 aa)). Residues 169-188 (PATANETKEAPEKKEKDVED) are disordered. The segment covering 174 to 187 (ETKEAPEKKEKDVE) has biased composition (basic and acidic residues).

The protein belongs to the WUS homeobox family.

The protein localises to the nucleus. Its function is as follows. Transcription factor which may be involved in developmental processes. This chain is WUSCHEL-related homeobox 4 (WOX4), found in Oryza sativa subsp. indica (Rice).